Here is a 906-residue protein sequence, read N- to C-terminus: Glutamate receptor 1 (906 aa).

The N-terminal stretch at 1–18 (MQHIFAFFCTGFLGAVVG) is a signal peptide. At 19–536 (ANFPNNIQIG…GVFSFLDPLA (518 aa)) the chain is on the extracellular side. 6 N-linked (GlcNAc...) asparagine glycosylation sites follow: Asn-63, Asn-249, Asn-257, Asn-363, Asn-401, and Asn-406. Cys-75 and Cys-323 are disulfide-bonded. Pro-492, Thr-494, and Arg-499 together coordinate L-glutamate. The chain crosses the membrane as a helical span at residues 537–557 (YEIWMCIVFAYIGVSVVLFLV). The Cytoplasmic portion of the chain corresponds to 558–584 (SRFSPYEWHSEEFEEGRDQTTSDQSNE). An intramembrane region (helical; Pore-forming) is located at residues 585–600 (FGIFNSLWFSLGAFMQ). An intramembrane segment occupies 601-603 (QGC). A lipid anchor (S-palmitoyl cysteine) is attached at Cys-603. At 604-609 (DISPRS) the chain is on the cytoplasmic side. A helical membrane pass occupies residues 610–630 (LSGRIVGGVWWFFTLIIISSY). Residues 631 to 805 (TANLAAFLTV…DKTSALSLSN (175 aa)) are Extracellular-facing. At Ser-645 the chain carries Phosphoserine. Ser-668 and Thr-669 together coordinate L-glutamate. Residue Ser-710 is modified to Phosphoserine. An L-glutamate-binding site is contributed by Glu-719. Cys-732 and Cys-787 are oxidised to a cystine. Residues 806-826 (VAGVFYILIGGLGLAMLVALI) traverse the membrane as a helical segment. Residues 827–906 (EFCYKSRSES…SGMPLGATGL (80 aa)) are Cytoplasmic-facing. Residue Cys-829 is the site of S-palmitoyl cysteine attachment. A phosphoserine mark is found at Ser-849 and Ser-863. The tract at residues 861-880 (RNSGAGASSGGSGENGRVVS) is disordered. Positions 903 to 906 (ATGL) match the PDZ-binding motif.

Belongs to the glutamate-gated ion channel (TC 1.A.10.1) family. GRIA1 subfamily. Homotetramer or heterotetramer of pore-forming glutamate receptor subunits; heteromeric assembly can be the result of both receptor subtype and flip or flop form and according the composition, one partner can be dominant with respect to the fast desensitizing current component, whereas the other can determine the steady-state component. Tetramers may be formed by the dimerization of dimers. Found in a complex with GRIA2, GRIA3, GRIA4, CNIH2, CNIH3, CACNG2, CACNG3, CACNG4, CACNG5, CACNG7 and CACNG8. Interacts with HIP1 and RASGRF2. Interacts with SYNDIG1 and GRIA2. Interacts with DLG1 (via C-terminus). Interacts with LRFN1. Interacts with PRKG2. Interacts with CNIH2 and CACNG2. Interacts with CACNG5; this interaction modulates the gating. Interacts (via C-terminus) with PDLIM4 (via LIM domain); this interaction as well as the interaction of PDLIM4 with alpha-actinin is required for their colocalization in early endosomes. Interacts with SNX27 (via PDZ domain); the interaction is required for recycling to the plasma membrane when endocytosed and prevent degradation in lysosomes. Interacts (via PDZ-binding motif) with SHANK3 (via PDZ domain). Interacts with CACNG3; associates GRIA1 with the adapter protein complex 4 (AP-4) to target GRIA1 to the somatodendritic compartment of neurons. Interacts with CACNG2; this interaction mediates traffick to the plasma membrane and modulation of desensitization. Interacts with CNIH2 and CNIH3; this interaction promotes expression at the plasma membrane and extensively modulates their gating properties by slowing deactivation and desensitization kinetics. Found in a complex with GRIA2, GRIA3, GRIA4, DLG4, CACNG8 and CNIH2. Palmitoylated. Depalmitoylated by CPT1C and upon L-glutamate stimulation. ZDHHC3/GODZ specifically palmitoylates Cys-603, which leads to Golgi retention and decreased cell surface expression. In contrast, Cys-829 palmitoylation does not affect cell surface expression but regulates stimulation-dependent endocytosis. Post-translationally, phosphorylated at Ser-645. Phosphorylated at Ser-710 by PKC. Phosphorylated at Ser-849 by PKC, PKA and CAMK2. Phosphorylated at Ser-863 by PKC, PKA and PRKG2. Phosphorylation of Ser-863 is reduced by induction of long-term depression and increased by induction of long-term potentiation. Widely expressed in brain.

Its subcellular location is the cell membrane. The protein localises to the endoplasmic reticulum membrane. It localises to the postsynaptic cell membrane. The protein resides in the postsynaptic density membrane. It is found in the cell projection. Its subcellular location is the dendrite. The protein localises to the dendritic spine. It localises to the early endosome membrane. The protein resides in the recycling endosome membrane. It is found in the presynapse. Its subcellular location is the synapse. It carries out the reaction Ca(2+)(in) = Ca(2+)(out). The enzyme catalyses Na(+)(in) = Na(+)(out). The catalysed reaction is Mg(2+)(in) = Mg(2+)(out). It catalyses the reaction Li(+)(in) = Li(+)(out). It carries out the reaction K(+)(in) = K(+)(out). The enzyme catalyses Sr(2+)(in) = Sr(2+)(out). Functionally, ionotropic glutamate receptor that functions as a ligand-gated cation channel, gated by L-glutamate and glutamatergic agonists such as alpha-amino-3-hydroxy-5-methyl-4-isoxazolepropionic acid (AMPA), quisqualic acid, and kainic acid. L-glutamate acts as an excitatory neurotransmitter at many synapses in the central nervous system. Binding of the excitatory neurotransmitter L-glutamate induces a conformation change, leading to the opening of the cation channel, and thereby converts the chemical signal to an electrical impulse upon entry of monovalent and divalent cations such as sodium and calcium. The receptor then desensitizes rapidly and enters in a transient inactive state, characterized by the presence of bound agonist. In the presence of CACNG2 or CACNG4 or CACNG7 or CACNG8, shows resensitization which is characterized by a delayed accumulation of current flux upon continued application of L-glutamate. Resensitization is blocked by CNIH2 through interaction with CACNG8 in the CACNG8-containing AMPA receptors complex. Calcium (Ca(2+)) permeability depends on subunits composition and, heteromeric channels containing edited GRIA2 subunit are calcium-impermeable. Also permeable to other divalents cations such as strontium(2+) and magnesium(2+) and monovalent cations such as potassium(1+) and lithium(1+). The protein is Glutamate receptor 1 of Homo sapiens (Human).